Consider the following 784-residue polypeptide: Lon protease (784 aa).

The region spanning 6–207 (LPLMALRDMV…TVITTLTSNI (202 aa)) is the Lon N-terminal domain. 356–363 (GPPGVGKT) lines the ATP pocket. Positions 592-773 (EDQIGSTTGL…DQVLKHALVE (182 aa)) constitute a Lon proteolytic domain. Active-site residues include S679 and K722.

This sequence belongs to the peptidase S16 family. Homohexamer. Organized in a ring with a central cavity.

It localises to the cytoplasm. The catalysed reaction is Hydrolysis of proteins in presence of ATP.. ATP-dependent serine protease that mediates the selective degradation of mutant and abnormal proteins as well as certain short-lived regulatory proteins. Required for cellular homeostasis and for survival from DNA damage and developmental changes induced by stress. Degrades polypeptides processively to yield small peptide fragments that are 5 to 10 amino acids long. Binds to DNA in a double-stranded, site-specific manner. This chain is Lon protease, found in Rickettsia typhi (strain ATCC VR-144 / Wilmington).